Here is a 429-residue protein sequence, read N- to C-terminus: Keratin, type I cytoskeletal 47 kDa (429 aa).

Residues 1–16 are compositionally biased toward low complexity; that stretch reads MTSYRSSSASYYSGSS. A disordered region spans residues 1-20; sequence MTSYRSSSASYYSGSSSKGG. The head stretch occupies residues 1–69; that stretch reads MTSYRSSSAS…EAASSSFGGN (69 aa). Positions 70-105 are coil 1A; sequence EKHAMQNLNDRLASYLEKVRALEATNSDLEGKIRNW. An IF rod domain is found at 70–385; it reads EKHAMQNLND…RLLEGELGQV (316 aa). Residues 106 to 127 form a linker 1 region; the sequence is YDKQSDAGIGAGSKDYSKYFEI. The tract at residues 128–219 is coil 1B; that stretch reads IAELRNKIRA…KNHEEEMSHA (92 aa). The interval 220 to 242 is linker 12; it reads KSQSAGKVSVEMDAALGVDLTSI. The coil 2 stretch occupies residues 243–381; that stretch reads LNNMRADYEI…QTYRRLLEGE (139 aa). Positions 382–429 are tail; the sequence is LGQVTTVANTSSVESKTESSSTSTTRTRMVKTIVEEVVDGKVVSSRVE. Residues 389-408 are disordered; that stretch reads ANTSSVESKTESSSTSTTRT. Low complexity predominate over residues 391-408; it reads TSSVESKTESSSTSTTRT.

Belongs to the intermediate filament family. As to quaternary structure, heterotetramer of two type I and two type II keratins.

This chain is Keratin, type I cytoskeletal 47 kDa (xk81a1), found in Xenopus laevis (African clawed frog).